Here is a 306-residue protein sequence, read N- to C-terminus: uncharacterized protein (306 aa).

It to M.tuberculosis Rv1486c, M.bovis Mb1522c and M.leprae ML1804.

This is an uncharacterized protein from Mycobacterium avium.